Reading from the N-terminus, the 510-residue chain is uncharacterized protein (510 aa).

Residues 1 to 89 (MTSSLDDIEP…QGQRKKVLLK (89 aa)) lie on the Lumenal side of the membrane. The segment at 38–76 (AVSQGVPDMDGQTTDSSKDPEPNSEDKKAFPPSSGSFFS) is disordered. Basic and acidic residues predominate over residues 53–66 (SSKDPEPNSEDKKA). Positions 67 to 76 (FPPSSGSFFS) are enriched in low complexity. Residues 90–110 (FVFTNCLLAIICFTMFVLFWG) form a helical membrane-spanning segment. The Cytoplasmic portion of the chain corresponds to 111 to 123 (ALYDTSKYLHKVK). A helical membrane pass occupies residues 124–144 (LLVVIQEPPVVILDNNSSMVV). Residues 145 to 312 (PSISYALPTF…TDRILLAPTQ (168 aa)) lie on the Lumenal side of the membrane. The helical transmembrane segment at 313–333 (IGVVYCLLLTFFQFLLYGPLH) threads the bilayer. Topologically, residues 334-349 (VEMAKVLRPANGLIYR) are cytoplasmic. A helical transmembrane segment spans residues 350-370 (IAMSWFTFFFASLFFCTTTAI). The Lumenal portion of the chain corresponds to 371 to 381 (FQVDFTKSFGR). The helical transmembrane segment at 382–402 (GGFVVYWMSTWLFMLAAGGAN) threads the bilayer. Topologically, residues 403–416 (ENAVMLVITLGPQY) are cytoplasmic. A helical membrane pass occupies residues 417-437 (LGFWILSFVILNIAPSFFPLA). Residues 438–474 (LNNNVYRYGYMMPVHNVIDIYRVIFFDVTRRKMGRNY) lie on the Lumenal side of the membrane. A helical membrane pass occupies residues 475–495 (GILVALIALNTALLPFVGKYA). Topologically, residues 496–510 (SRKLKQKALVAAKQS) are cytoplasmic.

This sequence to yeast SNG1.

Its subcellular location is the endoplasmic reticulum membrane. This is an uncharacterized protein from Saccharomyces cerevisiae (strain ATCC 204508 / S288c) (Baker's yeast).